Reading from the N-terminus, the 393-residue chain is CCA-adding enzyme (393 aa).

Residues Gly-27 and Arg-30 each coordinate ATP. 2 residues coordinate CTP: Gly-27 and Arg-30. Asp-40 and Asp-42 together coordinate Mg(2+). ATP-binding residues include Arg-111, Asp-154, Arg-157, Arg-160, and Arg-163. Positions 111, 154, 157, 160, and 163 each coordinate CTP.

This sequence belongs to the tRNA nucleotidyltransferase/poly(A) polymerase family. Bacterial CCA-adding enzyme type 3 subfamily. As to quaternary structure, homodimer. Mg(2+) serves as cofactor.

It carries out the reaction a tRNA precursor + 2 CTP + ATP = a tRNA with a 3' CCA end + 3 diphosphate. It catalyses the reaction a tRNA with a 3' CCA end + 2 CTP + ATP = a tRNA with a 3' CCACCA end + 3 diphosphate. Functionally, catalyzes the addition and repair of the essential 3'-terminal CCA sequence in tRNAs without using a nucleic acid template. Adds these three nucleotides in the order of C, C, and A to the tRNA nucleotide-73, using CTP and ATP as substrates and producing inorganic pyrophosphate. tRNA 3'-terminal CCA addition is required both for tRNA processing and repair. Also involved in tRNA surveillance by mediating tandem CCA addition to generate a CCACCA at the 3' terminus of unstable tRNAs. While stable tRNAs receive only 3'-terminal CCA, unstable tRNAs are marked with CCACCA and rapidly degraded. The protein is CCA-adding enzyme of Listeria monocytogenes serotype 4b (strain F2365).